Consider the following 755-residue polypeptide: Zinc transporter ZIP6 (755 aa).

The N-terminal stretch at 1–28 is a signal peptide; that stretch reads MARKLSVILILTFALSVTNPLHELKAAA. The Extracellular segment spans residues 29–325; sequence FPQTTEKISP…PKTYSLQIAW (297 aa). N-linked (GlcNAc...) asparagine glycosylation is present at Asn-67. A compositionally biased stretch (basic and acidic residues) spans 95-128; it reads DHDHHSDHEHHSDHERHSDHEHHSEHEHHSDHDH. Disordered stretches follow at residues 95-186 and 202-246; these read DHDH…SASE and LETI…SVSE. Residues 129-144 are compositionally biased toward basic residues; the sequence is HSHHNHAASGKNKRKA. Basic and acidic residues-rich tracts occupy residues 145–159 and 167–179; these read LCPD…KDPR and HRPE…RNVK. The segment covering 219-234 has biased composition (low complexity); it reads SSSTPPSVTSKSRVSR. N-linked (GlcNAc...) asparagine glycans are attached at residues Asn-241, Asn-266, and Asn-283. The helical transmembrane segment at 326–346 threads the bilayer; the sequence is VGGFIAISIISFLSLLGVILV. Residues 347–355 lie on the Cytoplasmic side of the membrane; it reads PLMNRVFFK. A helical membrane pass occupies residues 356-376; that stretch reads FLLSFLVALAVGTLSGDAFLH. At 377–423 the chain is on the extracellular side; that stretch reads LLPHSHASHHHSHSHEEPAMEMKRGPLFSHLSSQNIEESAYFDSTWK. A helical transmembrane segment spans residues 424-444; the sequence is GLTALGGLYFMFLVEHVLTLI. The Cytoplasmic portion of the chain corresponds to 445–657; sequence KQFKDKKKKN…LKAGMTVKQA (213 aa). A coiled-coil region spans residues 464–480; sequence VEIKKQLSKYESQLSTN. Phosphoserine occurs at positions 471 and 478. A helical membrane pass occupies residues 658 to 678; sequence VLYNALSAMLAYLGMATGIFI. Residues 679 to 686 are Extracellular-facing; the sequence is GHYAENVS. A glycan (N-linked (GlcNAc...) asparagine) is linked at Asn-684. The helical transmembrane segment at 687–707 threads the bilayer; sequence MWIFALTAGLFMYVALVDMVP. At 708–724 the chain is on the cytoplasmic side; it reads EMLHNDASDHGCSRWGY. Residues 725-745 traverse the membrane as a helical segment; sequence FFLQNAGMLLGFGIMLLISIF. The Extracellular portion of the chain corresponds to 746-755; the sequence is EHKIVFRINF.

The protein belongs to the ZIP transporter (TC 2.A.5) family. As to quaternary structure, interacts with SLC39A10; which triggers cells to undergo EMT and mitosis. Found in a complex with SLC39A6, SLC39A10 and with the 'Ser-727' phosphorylated form of STAT3 throughout mitosis. Found in a complex with SLC39A6, SLC39A10 and with NCAM1; this complex controls NCAM1 phosphorylation and integration into focal adhesion complexes during epithelial-to-mesenchymal transition (EMT). Found in a complex with SLC39A6, SLC39A10 and with GSK3B that controls NCAM1 phosphorylation. Cleaved on the N-terminus before locating to the plasma membrane. In terms of processing, N-glycosylated. Post-translationally, phosphorylated by ZAP70 in response to TCR stimulation leading to its activation. Highly expressed in the breast, prostate, placenta, kidney, pituitary and corpus callosum. Weakly expressed in heart and intestine. Also highly expressed in cells derived from an adenocarcinoma of the cervix and lung carcinoma.

The protein localises to the cell membrane. It is found in the cell projection. The protein resides in the lamellipodium membrane. Its subcellular location is the membrane raft. It localises to the apical cell membrane. It carries out the reaction Zn(2+)(in) = Zn(2+)(out). In terms of biological role, zinc-influx transporter which plays a role in zinc homeostasis and in the induction of epithelial-to-mesenchymal transition (EMT). When associated with SLC39A10, the heterodimer formed by SLC39A10 and SLC39A6 mediates cellular zinc uptake to trigger cells to undergo epithelial- to-mesenchymal transition (EMT). The SLC39A10-SLC39A6 heterodimer also controls NCAM1 phosphorylation and its integration into focal adhesion complexes during EMT. Zinc influx inactivates GSK3B, enabling unphosphorylated SNAI1 in the nucleus to down-regulate adherence genes such as CDH1, causing loss of cell adherence. In addition, the SLC39A10-SLC39A6 heterodimer plays an essentiel role in initiating mitosis by importing zinc into cells to initiate a pathway resulting in the onset of mitosis. Participates in the T-cell receptor signaling regulation by mediating cellular zinc uptake into activated lymphocytes. Regulates the zinc influx necessary for proper meiotic progression to metaphase II (MII) that allows the oocyte-to-egg transition. In Homo sapiens (Human), this protein is Zinc transporter ZIP6.